Consider the following 147-residue polypeptide: Bis(5'-nucleosyl)-tetraphosphatase [asymmetrical] (147 aa).

Ala-2 is modified (N-acetylalanine). Residues Ala-2–His-139 enclose the Nudix hydrolase domain. The Nudix box signature appears at Gly-43 to Gly-64.

Belongs to the Nudix hydrolase family. The cofactor is a divalent metal cation.

It catalyses the reaction P(1),P(4)-bis(5'-guanosyl) tetraphosphate + H2O = GMP + GTP + 2 H(+). The catalysed reaction is a 5'-end CoA-ribonucleoside in mRNA + H2O = a 5'-end phospho-adenosine-phospho-ribonucleoside in mRNA + (R)-4'-phosphopantetheine + 2 H(+). The enzyme catalyses a 5'-end FAD-phospho-ribonucleoside in mRNA + H2O = a 5'-end phospho-adenosine-phospho-ribonucleoside in mRNA + FMN + 2 H(+). Catalyzes the asymmetric hydrolysis of diadenosine 5',5'''-P1,P4-tetraphosphate (Ap4A) to yield AMP and ATP. Exhibits decapping activity towards FAD-capped RNAs and dpCoA-capped RNAs in vitro. This is Bis(5'-nucleosyl)-tetraphosphatase [asymmetrical] (NUDT2) from Bos taurus (Bovine).